We begin with the raw amino-acid sequence, 23 residues long: Magainin-BM2 (23 aa).

In terms of tissue distribution, expressed by the skin glands.

The protein localises to the secreted. Antimicrobial peptide. This Xenopus boumbaensis (Mawa clawed frog) protein is Magainin-BM2.